Here is a 713-residue protein sequence, read N- to C-terminus: Nucleolin (713 aa).

Residues 1-309 are disordered; sequence MVKLAKAGKT…QKIEGSEPTT (309 aa). N6-acetyllysine is present on residues Lys9, Lys15, and Lys16. Residues 24 to 46 show a composition bias toward acidic residues; that stretch reads VEEDSEDEEMSEDEDDSSGEEEV. A phosphoserine mark is found at Ser28, Ser34, Ser40, and Ser41. Residues 56-111 show a composition bias toward low complexity; the sequence is ATTTPAKKVVVSQTKKAAVPTPAKKAAVTPGKKAAATPAKKAVTPAKVVPTPGKKG. Copy 1 of the repeat occupies 58-65; it reads TTPAKKVV. Residues 58-135 are 8 X 8 AA tandem repeats of X-T-P-X-K-K-X-X; sequence TTPAKKVVVS…GAVTPAKGAK (78 aa). Ser67 is subject to Phosphoserine. Phosphothreonine is present on residues Thr69, Thr76, Thr84, and Thr92. Tandem repeats lie at residues 75-82, 83-90, and 91-98. The residue at position 96 (Lys96) is an N6-acetyllysine. Thr99 is subject to Phosphothreonine. Residues 99–104 form a 5; truncated repeat; sequence TPAKVV. Lys102 is subject to N6-acetyllysine. Residues 105–112 form repeat 6; it reads PTPGKKGA. Position 106 is a phosphothreonine (Thr106). An N6-acetyllysine mark is found at Lys109 and Lys116. A run of 2 repeats spans residues 120-127 and 128-135. Thr121 bears the Phosphothreonine mark. Lys124 is subject to N6-acetyllysine. Residues Ser145 and Ser157 each carry the phosphoserine modification. The segment covering 145–168 has biased composition (acidic residues); sequence SDEDEDEEDEDDSDEDEDEEDEFE. The segment covering 169–186 has biased composition (low complexity); sequence PPVVKGVKPAKAAPAAPA. A phosphoserine mark is found at Ser187 and Ser213. Residues 187-218 are compositionally biased toward acidic residues; sequence SEDEDEEDDDDEDDDDDDEEEEEEDDSEEEVM. Thr221 is modified (phosphothreonine). A compositionally biased stretch (acidic residues) spans 242–275; the sequence is EEEEDDEDDEDEEEDEDEEDEEDDEDEDEEEEEE. The span at 288–304 shows a compositional bias: basic and acidic residues; sequence MTKQKEAPEAKKQKIEG. Lys301 participates in a covalent cross-link: Glycyl lysine isopeptide (Lys-Gly) (interchain with G-Cter in SUMO1); alternate. A Glycyl lysine isopeptide (Lys-Gly) (interchain with G-Cter in SUMO2); alternate cross-link involves residue Lys301. At Ser305 the chain carries Phosphoserine. RRM domains lie at 311–387 and 397–470; these read FNLF…KPKG and RTLL…YTGE. At Lys322 the chain carries N6-acetyllysine. A Glycyl lysine isopeptide (Lys-Gly) (interchain with G-Cter in SUMO1); alternate cross-link involves residue Lys328. Residue Lys328 forms a Glycyl lysine isopeptide (Lys-Gly) (interchain with G-Cter in SUMO2); alternate linkage. At Lys352 the chain carries N6-acetyllysine. Ser360 carries the post-translational modification Phosphoserine. Thr371 is modified (phosphothreonine). A Glycyl lysine isopeptide (Lys-Gly) (interchain with G-Cter in SUMO2) cross-link involves residue Lys374. A Glycyl lysine isopeptide (Lys-Gly) (interchain with G-Cter in SUMO2); alternate cross-link involves residue Lys381. An N6-acetyllysine; alternate modification is found at Lys381. Lys402 carries the N6-acetyllysine modification. Ser405 bears the Phosphoserine mark. Thr409 bears the Phosphothreonine mark. Residue Lys448 is modified to N6-acetyllysine. 2 positions are modified to phosphoserine: Ser462 and Ser464. N6-acetyllysine is present on residues Lys471 and Lys480. An RRM 3 domain is found at 489–563; that stretch reads KTLVLSNLSY…RTIRLELQGP (75 aa). Lys516 participates in a covalent cross-link: Glycyl lysine isopeptide (Lys-Gly) (interchain with G-Cter in SUMO2); alternate. N6-acetyllysine; alternate is present on Lys516. Lys524 carries the post-translational modification N6-acetyllysine. Phosphoserine is present on Ser566. N6-acetyllysine is present on Lys575. Residues 575 to 650 enclose the RRM 4 domain; the sequence is KTLFVKGLSE…NKVTLDWAKP (76 aa). A Glycyl lysine isopeptide (Lys-Gly) (interchain with G-Cter in SUMO2); alternate cross-link involves residue Lys580. Lys580 carries the N6-acetyllysine; alternate modification. Residue Ser583 is modified to Phosphoserine. Residue Lys592 forms a Glycyl lysine isopeptide (Lys-Gly) (interchain with G-Cter in SUMO1); alternate linkage. Lys592 is covalently cross-linked (Glycyl lysine isopeptide (Lys-Gly) (interchain with G-Cter in SUMO2); alternate). Phosphoserine occurs at positions 594 and 622. Lys627 is covalently cross-linked (Glycyl lysine isopeptide (Lys-Gly) (interchain with G-Cter in SUMO2)). Positions 645–713 are disordered; that stretch reads LDWAKPKGEG…KPQGKKTKFE (69 aa). Residue Lys649 is modified to N6-acetyllysine. Residues 653–702 show a composition bias toward gly residues; that stretch reads EGGFGGRGGGRGGFGGRGGGRGGRGGFGGRGRGGFGGRGGFRGGRGGGGD. An asymmetric dimethylarginine mark is found at Arg659, Arg663, Arg669, Arg673, Arg676, Arg682, Arg684, Arg690, and Arg694. Position 697 is an asymmetric dimethylarginine; alternate (Arg697). Arg697 carries the omega-N-methylarginine; alternate modification.

Identified in a IGF2BP1-dependent mRNP granule complex containing untranslated mRNAs. Component of the SWAP complex that consists of NPM1, NCL/nucleolin, PARP1 and SWAP70. Component of a complex which is at least composed of HTATSF1/Tat-SF1, the P-TEFb complex components CDK9 and CCNT1, RNA polymerase II, SUPT5H, and NCL/nucleolin. Interacts with AICDA. Interacts with APTX. Interacts with C1QBP. Interacts with ERBB4. Interacts (via C-terminus) with FMR1 isoform 6 (via N-terminus). Interacts with GZF1; this interaction is important for nucleolar localization of GZF1. Interacts with NSUN2. Interacts with NVL. Interacts (via N-terminus domain) with SETX. Interacts (via RRM1 and C-terminal RRM4/Arg/Gly-rich domains) with TERT; the interaction is important for nucleolar localization of TERT. Interacts with WDR46. Interacts with ZFP36. Interacts with LRRC34. Interacts with RRP1B. Interacts with HNRNPU; this interaction occurs during mitosis. Interacts with RIOK1; RIOK1 recruits NCL to PRMT5 for symmetrically methylation. Interacts with ZBTB7B. Interacts with MDK; this interaction promotes NCL clustering and lateral movements of this complex into lipid rafts leading to MDK internalization. Interacts with HDGF. Interacts with ALKBH2. Interacts with IGFBP5; this interaction is necessary for IGFBP5 localization to the nucleus. Interacts with DDX24 (when ubiquitinated); this interaction may be important during ribosome biogenesis. In terms of processing, some glutamate residues are glycylated by TTLL8. This modification occurs exclusively on glutamate residues and results in a glycine chain on the gamma-carboxyl group. Symmetrically methylated by PRMT5.

Its subcellular location is the nucleus. The protein localises to the nucleolus. It localises to the cytoplasm. Nucleolin is the major nucleolar protein of growing eukaryotic cells. It is found associated with intranucleolar chromatin and pre-ribosomal particles. It induces chromatin decondensation by binding to histone H1. It is thought to play a role in pre-rRNA transcription and ribosome assembly. May play a role in the process of transcriptional elongation. Binds RNA oligonucleotides with 5'-UUAGGG-3' repeats more tightly than the telomeric single-stranded DNA 5'-TTAGGG-3' repeats. This is Nucleolin (Ncl) from Rattus norvegicus (Rat).